The chain runs to 223 residues: Deoxyribose-phosphate aldolase (223 aa).

The active-site Proton donor/acceptor is Asp89. Catalysis depends on Lys152, which acts as the Schiff-base intermediate with acetaldehyde. Catalysis depends on Lys181, which acts as the Proton donor/acceptor.

This sequence belongs to the DeoC/FbaB aldolase family. DeoC type 1 subfamily.

The protein localises to the cytoplasm. It catalyses the reaction 2-deoxy-D-ribose 5-phosphate = D-glyceraldehyde 3-phosphate + acetaldehyde. It functions in the pathway carbohydrate degradation; 2-deoxy-D-ribose 1-phosphate degradation; D-glyceraldehyde 3-phosphate and acetaldehyde from 2-deoxy-alpha-D-ribose 1-phosphate: step 2/2. Functionally, catalyzes a reversible aldol reaction between acetaldehyde and D-glyceraldehyde 3-phosphate to generate 2-deoxy-D-ribose 5-phosphate. This is Deoxyribose-phosphate aldolase from Listeria innocua serovar 6a (strain ATCC BAA-680 / CLIP 11262).